A 210-amino-acid polypeptide reads, in one-letter code: Small ribosomal subunit protein uS3 (210 aa).

In terms of domain architecture, KH type-2 spans 17-86 (IDEFLEKELR…NPQIDVQEIK (70 aa)).

It belongs to the universal ribosomal protein uS3 family. In terms of assembly, part of the 30S ribosomal subunit.

In terms of biological role, binds the lower part of the 30S subunit head. This is Small ribosomal subunit protein uS3 from Pyrococcus horikoshii (strain ATCC 700860 / DSM 12428 / JCM 9974 / NBRC 100139 / OT-3).